An 807-amino-acid chain; its full sequence is 85/88 kDa calcium-independent phospholipase A2 (807 aa).

S13 carries the phosphoserine modification. ANK repeat units lie at residues 120–147, 151–181, 185–215, 219–248, 251–281, 286–312, 316–345, 349–378, and 382–403; these read WTVTHLAVELGIRECFHHSRIISCANST, EGCTPLHLACRKGDSEILVELVQYCHAQMDV, KGETAFHYAVQGDNPQVLQLLGKNASAGLNQ, QGLTPLHLACQMGKQEMVRVLLLCNARCNI, PGGFPIHTAMKFSQKGCAEMIISMDSNQIHS, YGASPLHWAKNAEMARMLLKRGCDVDS, SGNTALHVAVTRNRFDCVMVLLTYGANAGA, HGNTPLHLAMSKDNMEMVKALIVFGAEVDT, and FGETPAFIASKISKLITRKALL. The next 2 membrane-spanning stretches (helical) occupy residues 481–501 and 512–532; these read LLCLDGGGVKGLVIIQLLIAI and LFDWVAGTSTGGILALAILHS. Residues 482–666 form the PNPLA domain; the sequence is LCLDGGGVKG…LANNPTLDAM (185 aa). The GXGXXG signature appears at 486–491; the sequence is GGGVKG. The GXSXG motif lies at 518-522; the sequence is GTSTG. The active-site Nucleophile is S520. The Proton acceptor role is filled by D653. A DGA/G motif is present at residues 653-655; sequence DGG. The tract at residues 678–687 is calmodulin-binding (1-9-14 motif); sequence RKGQGNKVKK. A calmodulin-binding (IQ motif) region spans residues 749–760; that stretch reads AWCEMVGIQYFR.

In terms of assembly, homodimer formed by catalytic domains tightly interacting through a large hydrophobic interface. The contact area involves 3 alpha helices, several loops and a part of the beta sheet from each monomer. Both active sites of the dimer are in close proximity adopting an open conformation that provide sufficient space for phospholipid access and favoring cooperativity in deacylation-reacylation reactions. Each monomer has 9 ankyrin repeats stacked side-by-side in an elongated structure oriented outwards from the catalytic core. In terms of tissue distribution, expressed in pancreatic beta-cells. Expressed in skeletal muscle (at protein level).

The protein localises to the cytoplasm. It localises to the cell membrane. It is found in the mitochondrion. Its subcellular location is the cell projection. The protein resides in the pseudopodium. The enzyme catalyses a 1,2-diacyl-sn-glycero-3-phosphocholine + H2O = a 1-acyl-sn-glycero-3-phosphocholine + a fatty acid + H(+). It catalyses the reaction a 1-O-alkyl-2-acyl-sn-glycero-3-phosphocholine + H2O = a 1-O-alkyl-sn-glycero-3-phosphocholine + a fatty acid + H(+). The catalysed reaction is 1,2-dihexadecanoyl-sn-glycero-3-phosphocholine + H2O = 1-hexadecanoyl-sn-glycero-3-phosphocholine + hexadecanoate + H(+). It carries out the reaction 1-hexadecanoyl-2-(9Z-octadecenoyl)-sn-glycero-3-phosphocholine + H2O = 1-hexadecanoyl-sn-glycero-3-phosphocholine + (9Z)-octadecenoate + H(+). The enzyme catalyses 1-hexadecanoyl-2-(9Z,12Z-octadecadienoyl)-sn-glycero-3-phosphocholine + H2O = (9Z,12Z)-octadecadienoate + 1-hexadecanoyl-sn-glycero-3-phosphocholine + H(+). It catalyses the reaction 1-hexadecanoyl-2-(5Z,8Z,11Z,14Z-eicosatetraenoyl)-sn-glycero-3-phosphocholine + H2O = 1-hexadecanoyl-sn-glycero-3-phosphocholine + (5Z,8Z,11Z,14Z)-eicosatetraenoate + H(+). The catalysed reaction is 1-octadecanoyl-2-(5Z,8Z,11Z,14Z-eicosatetraenoyl)-sn-glycero-3-phosphocholine + H2O = 1-octadecanoyl-sn-glycero-3-phosphocholine + (5Z,8Z,11Z,14Z)-eicosatetraenoate + H(+). It carries out the reaction 1-hexadecanoyl-2-(5Z,8Z,11Z,14Z-eicosatetraenoyl)-sn-glycero-3-phosphoethanolamine + H2O = 1-hexadecanoyl-sn-glycero-3-phosphoethanolamine + (5Z,8Z,11Z,14Z)-eicosatetraenoate + H(+). The enzyme catalyses 1,2-dihexadecanoyl-sn-glycero-3-phosphate + H2O = 1-hexadecanoyl-sn-glycero-3-phosphate + hexadecanoate + H(+). It catalyses the reaction a 1-acyl-sn-glycero-3-phosphocholine + H2O = sn-glycerol 3-phosphocholine + a fatty acid + H(+). The catalysed reaction is 1-hexadecanoyl-sn-glycero-3-phosphocholine + H2O = sn-glycerol 3-phosphocholine + hexadecanoate + H(+). It carries out the reaction 1-(5Z,8Z,11Z,14Z-eicosatetraenoyl)-sn-glycero-3-phosphocholine + H2O = sn-glycerol 3-phosphocholine + (5Z,8Z,11Z,14Z)-eicosatetraenoate + H(+). The enzyme catalyses 2-(5Z,8Z,11Z,14Z)-eicosatetraenoyl-sn-glycero-3-phosphocholine + H2O = sn-glycerol 3-phosphocholine + (5Z,8Z,11Z,14Z)-eicosatetraenoate + H(+). It catalyses the reaction 1-O-hexadecyl-2-(5Z,8Z,11Z,14Z)-eicosatetraenoyl-sn-glycero-3-phosphocholine + H2O = 1-O-hexadecyl-sn-glycero-3-phosphocholine + (5Z,8Z,11Z,14Z)-eicosatetraenoate + H(+). The catalysed reaction is 1-O-hexadecyl-2-acetyl-sn-glycero-3-phosphocholine + H2O = 1-O-hexadecyl-sn-glycero-3-phosphocholine + acetate + H(+). It carries out the reaction hexadecanoyl-CoA + H2O = hexadecanoate + CoA + H(+). The enzyme catalyses 1',3'-bis[1,2-di-(9Z-octadecenoyl)-sn-glycero-3-phospho]-glycerol + H2O = 1'-[1,2-di-(9Z-octadecenoyl)-sn-glycero-3-phospho]-3'-[1-(9Z-octadecenoyl)-sn-glycero-3-phospho]-glycerol + (9Z)-octadecenoate + H(+). It catalyses the reaction 1'-[1,2-di-(9Z-octadecenoyl)-sn-glycero-3-phospho]-3'-[1-(9Z-octadecenoyl)-sn-glycero-3-phospho]-glycerol + H2O = 1',3'-bis-[1-(9Z-octadecenoyl)-sn-glycero-3-phospho]-glycerol + (9Z)-octadecenoate + H(+). The catalysed reaction is 1',3'-bis-[1,2-di-(9Z,12Z-octadecadienoyl)-sn-glycero-3-phospho]-glycerol + H2O = 1'-[1,2-di-(9Z,12Z-octadecadienoyl)-sn-glycero-3-phospho]-3'-[1-(9Z,12Z-octadecadienoyl)-sn-glycero-3-phospho]-glycerol + (9Z,12Z)-octadecadienoate + H(+). It carries out the reaction 1-octadecanoyl-2-(15-hydroxy-(5Z,8Z,11Z,13E)-eicosatetraenoyl)-sn-glycero-3-phosphoethanolamine + H2O = 1-octadecanoyl-sn-glycero-3-phosphoethanolamine + 15-hydroxy-(5Z,8Z,11Z,13E)-eicosatetraenoate + H(+). With respect to regulation, activated by ATP. Inhibited by calcium-activated calmodulin. Inhibited by bromoenol lactone (BEL). Calcium-independent phospholipase involved in phospholipid remodeling with implications in cellular membrane homeostasis, mitochondrial integrity and signal transduction. Hydrolyzes the ester bond of the fatty acyl group attached at sn-1 or sn-2 position of phospholipids (phospholipase A1 and A2 activity respectively), producing lysophospholipids that are used in deacylation-reacylation cycles. Hydrolyzes both saturated and unsaturated long fatty acyl chains in various glycerophospholipid classes such as phosphatidylcholines, phosphatidylethanolamines and phosphatidates, with a preference for hydrolysis at sn-2 position. Can further hydrolyze lysophospholipids carrying saturated fatty acyl chains (lysophospholipase activity). Upon oxidative stress, contributes to remodeling of mitochondrial phospholipids in pancreatic beta cells, in a repair mechanism to reduce oxidized lipid content. Preferentially hydrolyzes oxidized polyunsaturated fatty acyl chains from cardiolipins, yielding monolysocardiolipins that can be reacylated with unoxidized fatty acyls to regenerate native cardiolipin species. Hydrolyzes oxidized glycerophosphoethanolamines present in pancreatic islets, releasing oxidized polyunsaturated fatty acids such as hydroxyeicosatetraenoates (HETEs). Has thioesterase activity toward fatty-acyl CoA releasing CoA-SH known to facilitate fatty acid transport and beta-oxidation in mitochondria particularly in skeletal muscle. Plays a role in regulation of membrane dynamics and homeostasis. Selectively hydrolyzes sn-2 arachidonoyl group in plasmalogen phospholipids, structural components of lipid rafts and myelin. Regulates F-actin polymerization at the pseudopods, which is required for both speed and directionality of MCP1/CCL2-induced monocyte chemotaxis. Targets membrane phospholipids to produce potent lipid signaling messengers. Generates lysophosphatidate (LPA, 1-acyl-glycerol-3-phosphate), which acts via G-protein receptors in various cell types. Has phospholipase A2 activity toward platelet-activating factor (PAF, 1-O-alkyl-2-acetyl-sn-glycero-3-phosphocholine), likely playing a role in inactivation of this potent pro-inflammatory signaling lipid. In response to glucose, amplifies calcium influx in pancreatic beta cells to promote INS secretion. The polypeptide is 85/88 kDa calcium-independent phospholipase A2 (Pla2g6) (Rattus norvegicus (Rat)).